The sequence spans 463 residues: Cysteine--tRNA ligase (463 aa).

Cys-29 provides a ligand contact to Zn(2+). Positions 31 to 41 (PTVYNYAHIGN) match the 'HIGH' region motif. 3 residues coordinate Zn(2+): Cys-211, His-236, and Glu-240. The 'KMSKS' region motif lies at 269–273 (KMSKS). ATP is bound at residue Lys-272.

The protein belongs to the class-I aminoacyl-tRNA synthetase family. As to quaternary structure, monomer. Zn(2+) serves as cofactor.

The protein resides in the cytoplasm. The catalysed reaction is tRNA(Cys) + L-cysteine + ATP = L-cysteinyl-tRNA(Cys) + AMP + diphosphate. The sequence is that of Cysteine--tRNA ligase from Caulobacter vibrioides (strain ATCC 19089 / CIP 103742 / CB 15) (Caulobacter crescentus).